The primary structure comprises 1755 residues: Deleted in lung and esophageal cancer protein 1 (1755 aa).

Residues 1–12 (METRSSKTRRSL) show a composition bias toward basic residues. Disordered regions lie at residues 1–39 (METR…PSQP), 1339–1360 (PGPS…GSSS), and 1529–1553 (SQDG…EETA). A compositionally biased stretch (low complexity) spans 30 to 39 (PAGSSSPSQP).

In terms of assembly, interacts with alpha- and beta-tubulin. Interacts with BBS2, BBS4, BBS5, MKKS, TCP1, CCT2, CCT3, CCT4, CCT5 and CCT7. Expressed in all tissues examined. Expression is highest in prostate and testis.

It is found in the cytoplasm. Essential for spermatogenesis and male fertility. May play an important role in sperm head and tail formation. May act as a tumor suppressor by inhibiting cell proliferation. This Homo sapiens (Human) protein is Deleted in lung and esophageal cancer protein 1.